Consider the following 206-residue polypeptide: Large ribosomal subunit protein uL4 (206 aa).

The interval 49–73 (KTKTISEISGTTKKPFAQKGGGRAR) is disordered.

It belongs to the universal ribosomal protein uL4 family. Part of the 50S ribosomal subunit.

One of the primary rRNA binding proteins, this protein initially binds near the 5'-end of the 23S rRNA. It is important during the early stages of 50S assembly. It makes multiple contacts with different domains of the 23S rRNA in the assembled 50S subunit and ribosome. Functionally, forms part of the polypeptide exit tunnel. The chain is Large ribosomal subunit protein uL4 from Paramagnetospirillum magneticum (strain ATCC 700264 / AMB-1) (Magnetospirillum magneticum).